The primary structure comprises 804 residues: Ribonucleoside-diphosphate reductase large subunit-like protein (804 aa).

This sequence belongs to the ribonucleoside diphosphate reductase large chain family. As to quaternary structure, the genome of human herpesvirus-6 does not code for a ribonucleotide reductase small subunit.

Its subcellular location is the virion. The protein resides in the host cytoplasm. In terms of biological role, does not possess a ribonucleotide reductase activity. Betaherpesviruses probably use another strategy to expand the dNTP pool in a quiescent host cell. The polypeptide is Ribonucleoside-diphosphate reductase large subunit-like protein (Human herpesvirus 6B (strain Z29) (HHV-6 variant B)).